We begin with the raw amino-acid sequence, 593 residues long: Aspartate--tRNA ligase (593 aa).

An L-aspartate-binding site is contributed by Glu-181. Residues 205–208 are aspartate; that stretch reads QLYK. Arg-227 is an L-aspartate binding site. ATP is bound by residues 227–229 and Gln-236; that span reads RDE. His-455 contributes to the L-aspartate binding site. Glu-489 is a binding site for ATP. Residue Arg-496 coordinates L-aspartate. An ATP-binding site is contributed by 541–544; that stretch reads GLDR.

The protein belongs to the class-II aminoacyl-tRNA synthetase family. Type 1 subfamily. As to quaternary structure, homodimer.

It localises to the cytoplasm. The catalysed reaction is tRNA(Asp) + L-aspartate + ATP = L-aspartyl-tRNA(Asp) + AMP + diphosphate. Its function is as follows. Catalyzes the attachment of L-aspartate to tRNA(Asp) in a two-step reaction: L-aspartate is first activated by ATP to form Asp-AMP and then transferred to the acceptor end of tRNA(Asp). This is Aspartate--tRNA ligase from Ruminiclostridium cellulolyticum (strain ATCC 35319 / DSM 5812 / JCM 6584 / H10) (Clostridium cellulolyticum).